The sequence spans 172 residues: Crossover junction endodeoxyribonuclease RuvC (172 aa).

Active-site residues include Asp-12, Glu-71, and Asp-143. Mg(2+) is bound by residues Asp-12, Glu-71, and Asp-143.

The protein belongs to the RuvC family. As to quaternary structure, homodimer which binds Holliday junction (HJ) DNA. The HJ becomes 2-fold symmetrical on binding to RuvC with unstacked arms; it has a different conformation from HJ DNA in complex with RuvA. In the full resolvosome a probable DNA-RuvA(4)-RuvB(12)-RuvC(2) complex forms which resolves the HJ. Requires Mg(2+) as cofactor.

It is found in the cytoplasm. It catalyses the reaction Endonucleolytic cleavage at a junction such as a reciprocal single-stranded crossover between two homologous DNA duplexes (Holliday junction).. Functionally, the RuvA-RuvB-RuvC complex processes Holliday junction (HJ) DNA during genetic recombination and DNA repair. Endonuclease that resolves HJ intermediates. Cleaves cruciform DNA by making single-stranded nicks across the HJ at symmetrical positions within the homologous arms, yielding a 5'-phosphate and a 3'-hydroxyl group; requires a central core of homology in the junction. The consensus cleavage sequence is 5'-(A/T)TT(C/G)-3'. Cleavage occurs on the 3'-side of the TT dinucleotide at the point of strand exchange. HJ branch migration catalyzed by RuvA-RuvB allows RuvC to scan DNA until it finds its consensus sequence, where it cleaves and resolves the cruciform DNA. The protein is Crossover junction endodeoxyribonuclease RuvC of Coxiella burnetii (strain CbuK_Q154) (Coxiella burnetii (strain Q154)).